An 842-amino-acid chain; its full sequence is Outer membrane usher protein LpfC (842 aa).

The signal sequence occupies residues methionine 1–alanine 21. A disulfide bridge links cysteine 819 with cysteine 841.

Belongs to the fimbrial export usher family.

It localises to the cell outer membrane. Its function is as follows. Involved in the export and assembly of LpfA fimbrial subunits across the outer membrane. The chain is Outer membrane usher protein LpfC (lpfC) from Salmonella typhimurium (strain LT2 / SGSC1412 / ATCC 700720).